The primary structure comprises 529 residues: Probable DNA helicase MPN_340 (529 aa).

The region spanning 2 to 285 (EHLNQEQKAA…FYTTQNYRSI (284 aa)) is the UvrD-like helicase ATP-binding domain. 23–30 (SGAGTGKT) provides a ligand contact to ATP.

It belongs to the helicase family. UvrD subfamily.

The enzyme catalyses Couples ATP hydrolysis with the unwinding of duplex DNA by translocating in the 3'-5' direction.. It carries out the reaction ATP + H2O = ADP + phosphate + H(+). This chain is Probable DNA helicase MPN_340, found in Mycoplasma pneumoniae (strain ATCC 29342 / M129 / Subtype 1) (Mycoplasmoides pneumoniae).